The chain runs to 179 residues: NADH dehydrogenase [ubiquinone] 1 beta subcomplex subunit 9 (179 aa).

Residue A2 is modified to N-acetylalanine. At S85 the chain carries Phosphoserine. The tract at residues 139-160 (QLQEETPVGGPRTEALPPARKQ) is disordered.

Belongs to the complex I LYR family. In terms of assembly, mammalian complex I is composed of 45 different subunits.

It is found in the mitochondrion inner membrane. Accessory subunit of the mitochondrial membrane respiratory chain NADH dehydrogenase (Complex I), that is believed to be not involved in catalysis. Complex I functions in the transfer of electrons from NADH to the respiratory chain. The immediate electron acceptor for the enzyme is believed to be ubiquinone. The chain is NADH dehydrogenase [ubiquinone] 1 beta subcomplex subunit 9 (NDUFB9) from Bos taurus (Bovine).